Consider the following 248-residue polypeptide: Ubiquinone/menaquinone biosynthesis C-methyltransferase UbiE (248 aa).

Serine 68 and aspartate 92 together coordinate S-adenosyl-L-methionine.

This sequence belongs to the class I-like SAM-binding methyltransferase superfamily. MenG/UbiE family.

The catalysed reaction is a 2-demethylmenaquinol + S-adenosyl-L-methionine = a menaquinol + S-adenosyl-L-homocysteine + H(+). It catalyses the reaction a 2-methoxy-6-(all-trans-polyprenyl)benzene-1,4-diol + S-adenosyl-L-methionine = a 5-methoxy-2-methyl-3-(all-trans-polyprenyl)benzene-1,4-diol + S-adenosyl-L-homocysteine + H(+). Its pathway is quinol/quinone metabolism; menaquinone biosynthesis; menaquinol from 1,4-dihydroxy-2-naphthoate: step 2/2. It functions in the pathway cofactor biosynthesis; ubiquinone biosynthesis. Methyltransferase required for the conversion of demethylmenaquinol (DMKH2) to menaquinol (MKH2) and the conversion of 2-polyprenyl-6-methoxy-1,4-benzoquinol (DDMQH2) to 2-polyprenyl-3-methyl-6-methoxy-1,4-benzoquinol (DMQH2). This is Ubiquinone/menaquinone biosynthesis C-methyltransferase UbiE from Rickettsia conorii (strain ATCC VR-613 / Malish 7).